A 245-amino-acid chain; its full sequence is 1-(5-phosphoribosyl)-5-[(5-phosphoribosylamino)methylideneamino] imidazole-4-carboxamide isomerase (245 aa).

The Proton acceptor role is filled by Asp8. The active-site Proton donor is the Asp129.

The protein belongs to the HisA/HisF family.

The protein localises to the cytoplasm. It catalyses the reaction 1-(5-phospho-beta-D-ribosyl)-5-[(5-phospho-beta-D-ribosylamino)methylideneamino]imidazole-4-carboxamide = 5-[(5-phospho-1-deoxy-D-ribulos-1-ylimino)methylamino]-1-(5-phospho-beta-D-ribosyl)imidazole-4-carboxamide. The protein operates within amino-acid biosynthesis; L-histidine biosynthesis; L-histidine from 5-phospho-alpha-D-ribose 1-diphosphate: step 4/9. In Heliobacterium modesticaldum (strain ATCC 51547 / Ice1), this protein is 1-(5-phosphoribosyl)-5-[(5-phosphoribosylamino)methylideneamino] imidazole-4-carboxamide isomerase.